Here is a 438-residue protein sequence, read N- to C-terminus: Trigger factor (438 aa).

Residues 160–245 (DDKVTIDFVG…VKKIQQAELP (86 aa)) enclose the PPIase FKBP-type domain.

This sequence belongs to the FKBP-type PPIase family. Tig subfamily.

It is found in the cytoplasm. It carries out the reaction [protein]-peptidylproline (omega=180) = [protein]-peptidylproline (omega=0). In terms of biological role, involved in protein export. Acts as a chaperone by maintaining the newly synthesized protein in an open conformation. Functions as a peptidyl-prolyl cis-trans isomerase. The protein is Trigger factor of Francisella tularensis subsp. tularensis (strain FSC 198).